The chain runs to 261 residues: Carbonic anhydrase 1 (261 aa).

A2 carries the post-translational modification N-acetylalanine. The 258-residue stretch at 4 to 261 (PDWGYDDKNG…LKGRTVRASF (258 aa)) folds into the Alpha-carbonic anhydrase domain. The active-site Proton donor/acceptor is the H65. Zn(2+) is bound by residues H95, H97, and H120. Residues T200 and 200–201 (TH) contribute to the substrate site. The disordered stretch occupies residues 235–261 (EGDNPVPSQRNNRPTQPLKGRTVRASF). The segment covering 240–249 (VPSQRNNRPT) has biased composition (polar residues).

It belongs to the alpha-carbonic anhydrase family. The cofactor is Zn(2+).

Its subcellular location is the cytoplasm. The catalysed reaction is hydrogencarbonate + H(+) = CO2 + H2O. It carries out the reaction urea = cyanamide + H2O. With respect to regulation, inhibited by acetazolamide. Its function is as follows. Catalyzes the reversible hydration of carbon dioxide. Can hydrate cyanamide to urea. In Macaca nemestrina (Pig-tailed macaque), this protein is Carbonic anhydrase 1 (CA1).